We begin with the raw amino-acid sequence, 102 residues long: Membrane-bound protein LytA (102 aa).

The N-terminal stretch at 1–16 (MKKFIALLFFILLLSG) is a signal peptide. C17 is lipidated: N-palmitoyl cysteine. Residue C17 is the site of S-diacylglycerol cysteine attachment.

The protein resides in the cell membrane. In terms of biological role, possible role in the secretion of LytB and LytC. In Bacillus subtilis (strain 168), this protein is Membrane-bound protein LytA (lytA).